The following is a 239-amino-acid chain: Endolytic peptidoglycan transglycosylase RlpA (239 aa).

Residues 1 to 25 (MTLTRKTLFLLTAAFGIHSFQTASA) form the signal peptide. The region spanning 160–239 (VAENKDIFID…GMVRAVLTAG (80 aa)) is the SPOR domain.

It belongs to the RlpA family.

In terms of biological role, lytic transglycosylase with a strong preference for naked glycan strands that lack stem peptides. This chain is Endolytic peptidoglycan transglycosylase RlpA, found in Neisseria meningitidis serogroup A / serotype 4A (strain DSM 15465 / Z2491).